A 379-amino-acid chain; its full sequence is Queuine tRNA-ribosyltransferase (379 aa).

D94 (proton acceptor) is an active-site residue. Residues 94 to 98, D148, Q191, and G218 contribute to the substrate site; that span reads DSGGF. The tract at residues 249–255 is RNA binding; it reads GVGSPDS. D268 (nucleophile) is an active-site residue. An RNA binding; important for wobble base 34 recognition region spans residues 273–277; it reads TRIAR. The Zn(2+) site is built by C306, C308, C311, and H337.

It belongs to the queuine tRNA-ribosyltransferase family. Homodimer. Within each dimer, one monomer is responsible for RNA recognition and catalysis, while the other monomer binds to the replacement base PreQ1. Requires Zn(2+) as cofactor.

It carries out the reaction 7-aminomethyl-7-carbaguanine + guanosine(34) in tRNA = 7-aminomethyl-7-carbaguanosine(34) in tRNA + guanine. Its pathway is tRNA modification; tRNA-queuosine biosynthesis. Its function is as follows. Catalyzes the base-exchange of a guanine (G) residue with the queuine precursor 7-aminomethyl-7-deazaguanine (PreQ1) at position 34 (anticodon wobble position) in tRNAs with GU(N) anticodons (tRNA-Asp, -Asn, -His and -Tyr). Catalysis occurs through a double-displacement mechanism. The nucleophile active site attacks the C1' of nucleotide 34 to detach the guanine base from the RNA, forming a covalent enzyme-RNA intermediate. The proton acceptor active site deprotonates the incoming PreQ1, allowing a nucleophilic attack on the C1' of the ribose to form the product. After dissociation, two additional enzymatic reactions on the tRNA convert PreQ1 to queuine (Q), resulting in the hypermodified nucleoside queuosine (7-(((4,5-cis-dihydroxy-2-cyclopenten-1-yl)amino)methyl)-7-deazaguanosine). This is Queuine tRNA-ribosyltransferase from Bacillus cereus (strain Q1).